Here is a 210-residue protein sequence, read N- to C-terminus: ATP-dependent Clp protease proteolytic subunit (210 aa).

Residue Ser113 is the Nucleophile of the active site. The active site involves His138.

This sequence belongs to the peptidase S14 family. In terms of assembly, fourteen ClpP subunits assemble into 2 heptameric rings which stack back to back to give a disk-like structure with a central cavity, resembling the structure of eukaryotic proteasomes.

It is found in the cytoplasm. The catalysed reaction is Hydrolysis of proteins to small peptides in the presence of ATP and magnesium. alpha-casein is the usual test substrate. In the absence of ATP, only oligopeptides shorter than five residues are hydrolyzed (such as succinyl-Leu-Tyr-|-NHMec, and Leu-Tyr-Leu-|-Tyr-Trp, in which cleavage of the -Tyr-|-Leu- and -Tyr-|-Trp bonds also occurs).. Cleaves peptides in various proteins in a process that requires ATP hydrolysis. Has a chymotrypsin-like activity. Plays a major role in the degradation of misfolded proteins. This Marinomonas sp. (strain MWYL1) protein is ATP-dependent Clp protease proteolytic subunit.